The chain runs to 335 residues: Phenylalanine--tRNA ligase alpha subunit (335 aa).

Glu262 contributes to the Mg(2+) binding site.

The protein belongs to the class-II aminoacyl-tRNA synthetase family. Phe-tRNA synthetase alpha subunit type 1 subfamily. In terms of assembly, tetramer of two alpha and two beta subunits. Mg(2+) is required as a cofactor.

It localises to the cytoplasm. It catalyses the reaction tRNA(Phe) + L-phenylalanine + ATP = L-phenylalanyl-tRNA(Phe) + AMP + diphosphate + H(+). The polypeptide is Phenylalanine--tRNA ligase alpha subunit (Prochlorococcus marinus (strain NATL2A)).